A 90-amino-acid chain; its full sequence is WAP four-disulfide core domain protein 12 (90 aa).

The signal sequence occupies residues 1-23; that stretch reads MGSSSFLVLMVSLALVTLVAVEG. Residues 27–74 form the WAP domain; sequence GIEKAGVCPADNVRCFKSDPPQCHTDQDCLGERKCCYLHCGFKCVIPV. 4 disulfides stabilise this stretch: Cys-34/Cys-62, Cys-41/Cys-66, Cys-49/Cys-61, and Cys-55/Cys-70.

The protein localises to the secreted. Antibacterial protein. Putative acid-stable proteinase inhibitor. This chain is WAP four-disulfide core domain protein 12 (WFDC12), found in Pongo abelii (Sumatran orangutan).